The sequence spans 156 residues: Ribosome maturation factor RimP (156 aa).

The protein belongs to the RimP family.

The protein resides in the cytoplasm. Functionally, required for maturation of 30S ribosomal subunits. The sequence is that of Ribosome maturation factor RimP from Prochlorococcus marinus (strain NATL2A).